The chain runs to 65 residues: Large ribosomal subunit protein bL35 (65 aa).

It belongs to the bacterial ribosomal protein bL35 family.

The polypeptide is Large ribosomal subunit protein bL35 (Thermoanaerobacter sp. (strain X514)).